A 656-amino-acid chain; its full sequence is Hemocyanin subunit A (656 aa).

A signal peptide spans 1 to 18 (MWSLALATLFVLGTVIRA). Cu cation is bound by residues His-197, His-201, and His-227. The N-linked (GlcNAc...) asparagine glycan is linked to Asn-313. Residues His-348, His-352, and His-388 each coordinate Cu cation. Cys-558 and Cys-606 are oxidised to a cystine.

This sequence belongs to the tyrosinase family. Hemocyanin subfamily. 36-chain polymer consisting of 6 hexamers, each of which includes 4 different chains, A, B, C and D. In terms of tissue distribution, hemolymph.

Its subcellular location is the secreted. It localises to the extracellular space. In terms of biological role, hemocyanins are copper-containing oxygen carriers occurring freely dissolved in the hemolymph of many mollusks and arthropods. In Scutigera coleoptrata (House centipede), this protein is Hemocyanin subunit A (HCA).